The chain runs to 107 residues: Period circadian protein (107 aa).

A disordered region spans residues 81-107 (ITNGSNTGTGTSSGSFQPPLLTEALLN). The span at 82 to 95 (TNGSNTGTGTSSGS) shows a compositional bias: low complexity.

As to quaternary structure, forms a heterodimer with timeless (TIM); the complex then translocates into the nucleus. Phosphorylated with a circadian rhythmicity, probably by the double-time protein (dbt). Phosphorylation could be implicated in the stability of per monomer and in the formation of heterodimer per-tim.

It is found in the nucleus. It localises to the cytoplasm. The protein resides in the perinuclear region. Its function is as follows. Essential for biological clock functions. Determines the period length of circadian and ultradian rhythms; an increase in PER dosage leads to shortened circadian rhythms and a decrease leads to lengthened circadian rhythms. Essential for the circadian rhythmicity of locomotor activity, eclosion behavior, and for the rhythmic component of the male courtship song that originates in the thoracic nervous system. The biological cycle depends on the rhythmic formation and nuclear localization of the TIM-PER complex. Light induces the degradation of TIM, which promotes elimination of PER. Nuclear activity of the heterodimer coordinatively regulates PER and TIM transcription through a negative feedback loop. Behaves as a negative element in circadian transcriptional loop. Does not appear to bind DNA, suggesting indirect transcriptional inhibition. The chain is Period circadian protein (per) from Beris vallata (Common orange legionnaire).